The following is a 115-amino-acid chain: NAD(P)H-quinone oxidoreductase subunit M (115 aa).

Belongs to the complex I NdhM subunit family. As to quaternary structure, NDH-1 can be composed of about 15 different subunits; different subcomplexes with different compositions have been identified which probably have different functions.

It is found in the cellular thylakoid membrane. It carries out the reaction a plastoquinone + NADH + (n+1) H(+)(in) = a plastoquinol + NAD(+) + n H(+)(out). It catalyses the reaction a plastoquinone + NADPH + (n+1) H(+)(in) = a plastoquinol + NADP(+) + n H(+)(out). In terms of biological role, NDH-1 shuttles electrons from an unknown electron donor, via FMN and iron-sulfur (Fe-S) centers, to quinones in the respiratory and/or the photosynthetic chain. The immediate electron acceptor for the enzyme in this species is believed to be plastoquinone. Couples the redox reaction to proton translocation, and thus conserves the redox energy in a proton gradient. Cyanobacterial NDH-1 also plays a role in inorganic carbon-concentration. The sequence is that of NAD(P)H-quinone oxidoreductase subunit M from Synechococcus sp. (strain CC9902).